A 324-amino-acid chain; its full sequence is Acetyl-coenzyme A carboxylase carboxyl transferase subunit alpha (324 aa).

The CoA carboxyltransferase C-terminal domain maps to 44-298 (ILQRKLLNLK…KNKIRDQLDF (255 aa)).

Belongs to the AccA family. In terms of assembly, acetyl-CoA carboxylase is a heterohexamer composed of biotin carboxyl carrier protein (accB), biotin carboxylase (accC) and two subunits each of ACCase subunit alpha (accA) and ACCase subunit beta (accD).

The protein localises to the plastid. It localises to the chloroplast. The enzyme catalyses N(6)-carboxybiotinyl-L-lysyl-[protein] + acetyl-CoA = N(6)-biotinyl-L-lysyl-[protein] + malonyl-CoA. It functions in the pathway lipid metabolism; malonyl-CoA biosynthesis; malonyl-CoA from acetyl-CoA: step 1/1. Its function is as follows. Component of the acetyl coenzyme A carboxylase (ACC) complex. First, biotin carboxylase catalyzes the carboxylation of biotin on its carrier protein (BCCP) and then the CO(2) group is transferred by the carboxyltransferase to acetyl-CoA to form malonyl-CoA. In Cyanidium caldarium (Red alga), this protein is Acetyl-coenzyme A carboxylase carboxyl transferase subunit alpha.